The following is a 443-amino-acid chain: Thymidine phosphorylase (443 aa).

It belongs to the thymidine/pyrimidine-nucleoside phosphorylase family. Homodimer.

The enzyme catalyses thymidine + phosphate = 2-deoxy-alpha-D-ribose 1-phosphate + thymine. It functions in the pathway pyrimidine metabolism; dTMP biosynthesis via salvage pathway; dTMP from thymine: step 1/2. In terms of biological role, the enzymes which catalyze the reversible phosphorolysis of pyrimidine nucleosides are involved in the degradation of these compounds and in their utilization as carbon and energy sources, or in the rescue of pyrimidine bases for nucleotide synthesis. In Shewanella sediminis (strain HAW-EB3), this protein is Thymidine phosphorylase.